The chain runs to 243 residues: MSGHSKWHNIQGRKNAQDSKRGKIFQKLSRELYMAAKQGGPDPSGNPSLRLVMDKAKAANMPKDNIKRALDKASDRDAANYDEVTYEGYGPGGVAILVEALTDNRNRTSSTVRVAITRHGGNMAAAGAVSYMFDRKGYLVISRDDLDVDEDQMLEDALEAGAEDMQTSDEAFEIYTDPKEFAQVRDALEEKGYKFVQNELTMVPQNLTPIPEDKVEKFQAMIDQLEDDDDVQEVYTAGDWPDD.

Residues 1–23 (MSGHSKWHNIQGRKNAQDSKRGK) are disordered.

It belongs to the TACO1 family.

The protein resides in the cytoplasm. This chain is Probable transcriptional regulatory protein LSEI_1022, found in Lacticaseibacillus paracasei (strain ATCC 334 / BCRC 17002 / CCUG 31169 / CIP 107868 / KCTC 3260 / NRRL B-441) (Lactobacillus paracasei).